A 62-amino-acid chain; its full sequence is Photosystem II reaction center protein Z (62 aa).

2 helical membrane passes run 8 to 28 (AVFA…VVFA) and 41 to 61 (FSGT…NSLI).

This sequence belongs to the PsbZ family. In terms of assembly, PSII is composed of 1 copy each of membrane proteins PsbA, PsbB, PsbC, PsbD, PsbE, PsbF, PsbH, PsbI, PsbJ, PsbK, PsbL, PsbM, PsbT, PsbY, PsbZ, Psb30/Ycf12, at least 3 peripheral proteins of the oxygen-evolving complex and a large number of cofactors. It forms dimeric complexes.

It localises to the plastid. Its subcellular location is the chloroplast thylakoid membrane. In terms of biological role, may control the interaction of photosystem II (PSII) cores with the light-harvesting antenna, regulates electron flow through the 2 photosystem reaction centers. PSII is a light-driven water plastoquinone oxidoreductase, using light energy to abstract electrons from H(2)O, generating a proton gradient subsequently used for ATP formation. This Gossypium barbadense (Sea Island cotton) protein is Photosystem II reaction center protein Z.